The sequence spans 103 residues: Large ribosomal subunit protein bL21 (103 aa).

It belongs to the bacterial ribosomal protein bL21 family. In terms of assembly, part of the 50S ribosomal subunit. Contacts protein L20.

Its function is as follows. This protein binds to 23S rRNA in the presence of protein L20. This chain is Large ribosomal subunit protein bL21, found in Shewanella sediminis (strain HAW-EB3).